We begin with the raw amino-acid sequence, 357 residues long: Putative electron transport protein YccM (357 aa).

The Cytoplasmic segment spans residues 1-36; that stretch reads MAENKRTRWQRRPGTTGGKLPWNDWRNATTWRKATQ. The helical transmembrane segment at 37 to 54 threads the bilayer; the sequence is LLLLAMNIYIAITFWYWV. The Periplasmic segment spans residues 55-91; that stretch reads RYYETASSTTFVARPGGIEGWLPIAGLMNLKYSLVTG. A helical transmembrane segment spans residues 92–114; the sequence is QLPSVHAAAMLLLVAFIVISLLL. Residues 115 to 158 lie on the Cytoplasmic side of the membrane; sequence KKAFCSWLCPVGTLSELIGDLGNKLFGRQCVLPRWLDIPLRGVK. Residues 159-181 traverse the membrane as a helical segment; it reads YLLLSFFIYIALLMPAQAIHYFM. The Periplasmic segment spans residues 182-195; that stretch reads LSPYSVVMDVKMLD. A helical membrane pass occupies residues 196 to 218; the sequence is FFRHMGTATLISVTVLLIASLFI. The Cytoplasmic portion of the chain corresponds to 219-309; sequence RHAWCRYLCP…KPAANKKAFA (91 aa). 4Fe-4S ferredoxin-type domains lie at 242-270 and 269-299; these read FKIRRNAESCIDCGKCAKNCPSRIPVDKL and KLIQVRTVECTGCMTCVESCPVASTLTFSLQ. The [4Fe-4S] cluster site is built by C251, C254, C257, C261, C278, C281, C284, and C288. The chain crosses the membrane as a helical span at residues 310-332; it reads LSGWLMTLLVLGIMFAVIGYAMY. Topologically, residues 333–357 are periplasmic; sequence AGVWQSPVPEELYRRLIPQAPMIGH.

The protein localises to the cell inner membrane. This is Putative electron transport protein YccM (yccM) from Escherichia coli (strain K12).